Consider the following 341-residue polypeptide: Mitochondrial dimethyladenosine transferase 1 (341 aa).

The N-terminal 27 residues, 1 to 27, are a transit peptide targeting the mitochondrion; that stretch reads MASSRTLGTFRLPPLPTIREIIKLFRL. S-adenosyl-L-methionine contacts are provided by leucine 38, glycine 63, glutamate 85, lysine 86, aspartate 111, valine 112, and asparagine 141.

The protein belongs to the class I-like SAM-binding methyltransferase superfamily. rRNA adenine N(6)-methyltransferase family. KsgA subfamily. In terms of assembly, interacts with mitochondrial RNA polymerase POLRMT. Interacts with TFAM. Bound to the maturing mtSSU until the late stages of assembly.

It is found in the mitochondrion. It carries out the reaction adenosine(N)/adenosine(N+1) in rRNA + 4 S-adenosyl-L-methionine = N(6)-dimethyladenosine(N)/N(6)-dimethyladenosine(N+1) in rRNA + 4 S-adenosyl-L-homocysteine + 4 H(+). Mitochondrial methyltransferase which uses S-adenosyl methionine to dimethylate two highly conserved adjacent adenosine residues (A1583 and A1584) within the loop of helix 45 at the 3-prime end of 12S rRNA, thereby regulating the assembly or stability of the small subunit of the mitochondrial ribosome. Also required for basal transcription of mitochondrial DNA, probably via its interaction with POLRMT and TFAM. Stimulates transcription independently of the methyltransferase activity. This is Mitochondrial dimethyladenosine transferase 1 (TFB1M) from Bos taurus (Bovine).